The following is a 594-amino-acid chain: Probable pectinesterase/pectinesterase inhibitor 33 (594 aa).

Positions 1–22 (MLRGIFHICLLASFLLLPFSSA) are cleaved as a signal peptide. Residues 28-75 (FTGGTDAPPPWDHNVSPPPETAPSPTPTSSPSTTSPPSPGPVAAPSPI) form a disordered region. Residues 34–71 (APPPWDHNVSPPPETAPSPTPTSSPSTTSPPSPGPVAA) show a composition bias toward pro residues. Residues Asn77, Asn170, Asn213, and Asn226 are each glycosylated (N-linked (GlcNAc...) asparagine). The tract at residues 78–237 (GSVSGDMTWW…SDLIGNCLAV (160 aa)) is pectinesterase inhibitor 33. Residues 280–581 (HLVVAQDRSG…TVGSLIAGGS (302 aa)) are pectinesterase 33. Thr356 and Gln386 together coordinate substrate. Catalysis depends on Asp409, which acts as the Proton donor; for pectinesterase activity. A disulfide bridge connects residues Cys423 and Cys443. Residue Asp430 is the Nucleophile; for pectinesterase activity of the active site. Positions 498 and 500 each coordinate substrate.

In the N-terminal section; belongs to the PMEI family. It in the C-terminal section; belongs to the pectinesterase family. As to expression, expressed in siliques.

The protein resides in the secreted. It is found in the cell wall. The catalysed reaction is [(1-&gt;4)-alpha-D-galacturonosyl methyl ester](n) + n H2O = [(1-&gt;4)-alpha-D-galacturonosyl](n) + n methanol + n H(+). It functions in the pathway glycan metabolism; pectin degradation; 2-dehydro-3-deoxy-D-gluconate from pectin: step 1/5. Acts in the modification of cell walls via demethylesterification of cell wall pectin. The sequence is that of Probable pectinesterase/pectinesterase inhibitor 33 (PME33) from Arabidopsis thaliana (Mouse-ear cress).